Consider the following 431-residue polypeptide: MRIVDINERLAISGQPNTDEFINFARRGYRSIINLRPDGEEPNQPGNDAEQAAARRAGLAYNFVPVIGTSITEADIQAFQRAIATTEGSVLVHCKSGTRALMLYALSEVIDGRMKRDEVEALGHAHGFDLGRAVTWLERQAIQTPRVSGFFDPRTSSIQYVVTDQTTKRCAIIDPVLDFDEKSGATATTNADAILAHVEQQGLTVEWILDTHPHADHFSAAQYLKQRTGAPTAIGTHVTEVQRLWREIYNWPTLSANGSQWDHLFADGDVFNVGSIKGRVMFSPGHTLASVTYVIGDTAFVHDTIFMPDAGTARADFPGGSARALWSSIQTILSLPDETRLFTGHDYQPSGRHPRWESTVGEQKKANPHLAGVDETTFVALREARDKTLPMPKLILHALQVNVLGGRLPEPETNGRRYLKFPLNALEGAAW.

Zn(2+)-binding residues include His-212, His-214, and His-286. Asp-309 contacts substrate.

Belongs to the metallo-beta-lactamase superfamily. Zn(2+) is required as a cofactor.

Its function is as follows. Could play a role in cell adherence or biofilm development. In Xylella fastidiosa (strain 9a5c), this protein is Beta-lactamase hydrolase-like protein.